The chain runs to 227 residues: PKHD-type hydroxylase Pden_4677 (227 aa).

In terms of domain architecture, Fe2OG dioxygenase spans histidine 78–serine 178. Fe cation is bound by residues histidine 96, aspartate 98, and histidine 159. Residue arginine 169 participates in 2-oxoglutarate binding.

The cofactor is Fe(2+). L-ascorbate serves as cofactor.

The protein is PKHD-type hydroxylase Pden_4677 of Paracoccus denitrificans (strain Pd 1222).